We begin with the raw amino-acid sequence, 266 residues long: Transmembrane domain-containing protein TMIGD3 (266 aa).

The tract at residues 1–20 (MEGSPAGPIEQKEARWESSW) is disordered. The chain crosses the membrane as a helical span at residues 55–75 (FLPVMWLFILLSLALISDAMV). N-linked (GlcNAc...) asparagine glycosylation occurs at asparagine 192. The chain crosses the membrane as a helical span at residues 213 to 233 (ILIICILITGLGIISVISHLT).

Expressed in the lung and bone. Expressed at lower levels in osteosarcoma tissues (at protein level).

It localises to the membrane. Functionally, plays a suppressive role in osteosarcoma malignancy by inhibiting NF-kappa-B activity. The chain is Transmembrane domain-containing protein TMIGD3 from Homo sapiens (Human).